The sequence spans 415 residues: Levansucrase (415 aa).

Positions 45, 46, 132, 202, and 203 each coordinate sucrose. Asp46 functions as the Nucleophile in the catalytic mechanism. Glu287 serves as the catalytic Proton donor/acceptor.

This sequence belongs to the glycosyl hydrolase 68 family.

It catalyses the reaction [6)-beta-D-fructofuranosyl-(2-&gt;](n) alpha-D-glucopyranoside + sucrose = [6)-beta-D-fructofuranosyl-(2-&gt;](n+1) alpha-D-glucopyranoside + D-glucose. Its function is as follows. Catalyzes the synthesis of levan, a fructose polymer, by transferring the fructosyl moiety from sucrose to a growing acceptor molecule. This chain is Levansucrase, found in Rahnella aquatilis (strain ATCC 33071 / DSM 4594 / JCM 1683 / NBRC 105701 / NCIMB 13365 / CIP 78.65).